We begin with the raw amino-acid sequence, 863 residues long: Glycerol-3-phosphate acyltransferase (863 aa).

Residues 1–29 are disordered; sequence MPKKNSPLLPKETTTTQSSVDTSGSSNLT. Residues 12–29 are compositionally biased toward polar residues; that stretch reads ETTTTQSSVDTSGSSNLT. Positions 343 to 348 match the HXXXXD motif motif; the sequence is SHRSHI.

It belongs to the GPAT/DAPAT family.

The protein localises to the cell inner membrane. The catalysed reaction is sn-glycerol 3-phosphate + an acyl-CoA = a 1-acyl-sn-glycero-3-phosphate + CoA. Its pathway is phospholipid metabolism; CDP-diacylglycerol biosynthesis; CDP-diacylglycerol from sn-glycerol 3-phosphate: step 1/3. In Xylella fastidiosa (strain M12), this protein is Glycerol-3-phosphate acyltransferase.